We begin with the raw amino-acid sequence, 207 residues long: MSHGPLRVGIGGPVGAGKTTLTEKLCAALAHRCSMAVITNDIYTREDAEALMRAQVLPAERIRGVETGGCPHTAIREDASINLAAVADLRRTFPDLDLILIESGGDNLAATFSPELADLTIYVIDTAAGQDIPRKRGPGLARSDLLVVNKIDLAPHVGVDLARLEADTQAARGQRPYVMARMRAGVGVEAIVAFLEREGGLQLLPQD.

12–19 (GPVGAGKT) provides a ligand contact to GTP.

Belongs to the SIMIBI class G3E GTPase family. UreG subfamily. In terms of assembly, homodimer. UreD, UreF and UreG form a complex that acts as a GTP-hydrolysis-dependent molecular chaperone, activating the urease apoprotein by helping to assemble the nickel containing metallocenter of UreC. The UreE protein probably delivers the nickel.

It localises to the cytoplasm. In terms of biological role, facilitates the functional incorporation of the urease nickel metallocenter. This process requires GTP hydrolysis, probably effectuated by UreG. The polypeptide is Urease accessory protein UreG (Cereibacter sphaeroides (strain ATCC 17023 / DSM 158 / JCM 6121 / CCUG 31486 / LMG 2827 / NBRC 12203 / NCIMB 8253 / ATH 2.4.1.) (Rhodobacter sphaeroides)).